The chain runs to 193 residues: UPF0301 protein Fphi_1754 (193 aa).

The protein belongs to the UPF0301 (AlgH) family.

In Francisella philomiragia subsp. philomiragia (strain ATCC 25017 / CCUG 19701 / FSC 153 / O#319-036), this protein is UPF0301 protein Fphi_1754.